Here is a 323-residue protein sequence, read N- to C-terminus: Lipid A biosynthesis acyltransferase 1 (323 aa).

Residues 23–43 (YWGAWLGVAAMAGIALTPPKF) traverse the membrane as a helical segment. The HXXXXD motif signature appears at 139-144 (HGWAVD).

It belongs to the LpxL/LpxM/LpxP family. LpxM subfamily.

It localises to the cell inner membrane. The catalysed reaction is an alpha-Kdo-(2-&gt;4)-alpha-Kdo-(2-&gt;6)-(acyl)-lipid IVA + a fatty acyl-[ACP] = an alpha-Kdo-(2-&gt;4)-alpha-Kdo-(2-&gt;6)-lipid A + holo-[ACP]. Its pathway is glycolipid biosynthesis; KDO(2)-lipid A biosynthesis; KDO(2)-lipid A from CMP-3-deoxy-D-manno-octulosonate and lipid IV(A): step 4/4. The protein operates within bacterial outer membrane biogenesis; lipopolysaccharide biosynthesis. Its function is as follows. Catalyzes the transfer of an acyl chain from an acyl-[acyl-carrier-protein] (ACP) to a Kdo(2)-(acyl)-lipid IV(A) to form a Kdo(2)-lipid A. The protein is Lipid A biosynthesis acyltransferase 1 of Shigella flexneri.